We begin with the raw amino-acid sequence, 513 residues long: Matrix metalloproteinase-27 (513 aa).

An N-terminal signal peptide occupies residues 1 to 17 (MKRLLLLFLFFITFSSA). The propeptide at 18-98 (FPLVRMTENE…PRCGVPDVGQ (81 aa)) is activation peptide. N-linked (GlcNAc...) asparagine glycosylation occurs at Asn55. A Cysteine switch motif is present at residues 89–96 (PRCGVPDV). Zn(2+) is bound at residue Cys91. An N-linked (GlcNAc...) asparagine glycan is attached at Asn110. Positions 121 and 155 each coordinate Ca(2+). Position 165 (His165) interacts with Zn(2+). The Ca(2+) site is built by Asp173, Gly174, and Val178. His181 contributes to the Zn(2+) binding site. Positions 188 and 192 each coordinate Ca(2+). His194 serves as a coordination point for Zn(2+). Residues Asp196 and Glu199 each contribute to the Ca(2+) site. His216 provides a ligand contact to Zn(2+). Residue Glu217 is part of the active site. The Zn(2+) site is built by His220 and His226. Hemopexin repeat units lie at residues 276 to 325 (PHAC…WPSL), 326 to 371 (PADL…GFPG), 373 to 421 (VKKI…FPGI), and 422 to 465 (SIRV…WFQC). A disulfide bridge connects residues Cys279 and Cys465. Asp286 lines the Ca(2+) pocket. Ca(2+)-binding residues include Asp377 and Asp426. An N-linked (GlcNAc...) asparagine glycan is attached at Asn452. The required for retention in the endoplasmic reticulum stretch occupies residues 466–513 (KEPKNSSFGFDINKEKAHSGGIKILYHKSLSLFIFGIVHLLKNTSIYQ).

Belongs to the peptidase M10A family. Requires Ca(2+) as cofactor. It depends on Zn(2+) as a cofactor. Post-translationally, N-glycosylated. In terms of tissue distribution, expressed in B-cells. Expressed in a subset of endometrial macrophages related to menstruation and in ovarian and peritoneal endometriotic lesions (at protein level).

It is found in the endoplasmic reticulum. Its function is as follows. Matrix metalloproteinases degrade protein components of the extracellular matrix such as fibronectin, laminin, gelatins and/or collagens. This is Matrix metalloproteinase-27 (MMP27) from Homo sapiens (Human).